Reading from the N-terminus, the 328-residue chain is Homeobox protein Hox-C13 (328 aa).

The tract at residues 23–48 (AAESGSGGGGGGGGAGGAGGGCSGAS) is disordered. Positions 27-45 (GSGGGGGGGGAGGAGGGCS) are enriched in gly residues. Positions 258–317 (GRKKRVPYTKVQLKELEKEYAASKFITKEKRRRISATTNLSERQVTIWFQNRRVKEKKVV) form a DNA-binding region, homeobox.

It belongs to the Abd-B homeobox family. Expressed in differentiating keratinocytes. In the hair follicle lower matrix, expressed in all 3 hair shaft-forming compartments, i.e. cuticle, cortex and medulla. Expression stops sharply at the boundary with the germinal matrix compartment.

The protein resides in the nucleus. In terms of biological role, transcription factor which plays a role in hair follicle differentiation. Regulates FOXQ1 expression and that of other hair-specific genes. This Mus musculus (Mouse) protein is Homeobox protein Hox-C13 (Hoxc13).